Consider the following 366-residue polypeptide: Histidinol-phosphate aminotransferase 2 (366 aa).

N6-(pyridoxal phosphate)lysine is present on K226.

The protein belongs to the class-II pyridoxal-phosphate-dependent aminotransferase family. Histidinol-phosphate aminotransferase subfamily. As to quaternary structure, homodimer. The cofactor is pyridoxal 5'-phosphate.

The enzyme catalyses L-histidinol phosphate + 2-oxoglutarate = 3-(imidazol-4-yl)-2-oxopropyl phosphate + L-glutamate. Its pathway is amino-acid biosynthesis; L-histidine biosynthesis; L-histidine from 5-phospho-alpha-D-ribose 1-diphosphate: step 7/9. The protein is Histidinol-phosphate aminotransferase 2 (hisC2) of Haemophilus influenzae (strain ATCC 51907 / DSM 11121 / KW20 / Rd).